The following is a 319-amino-acid chain: Serpentine receptor class X-43 (319 aa).

Helical transmembrane passes span 28–48 (VVSM…IGCF), 67–87 (AQLM…LLNI), 95–115 (YLFG…FLLM), 138–158 (IRTF…YLVV), 164–184 (FVFY…CGTL), 194–214 (TVLS…LMAF), and 267–287 (FFFT…VVVF).

The protein belongs to the G-protein coupled receptor 1 family. As to expression, expressed in ASI sensory neurons.

It localises to the cell membrane. The protein localises to the perikaryon. The protein resides in the cell projection. Its subcellular location is the cilium. In terms of biological role, receptor for the ascaroside pheromone icas#9 which suppresses exploratory forgaging behavior. In response to ascaroside icas#9, may furthermore play a role in the expression of genes in the TGF-beta signaling pathway, such as daf-7, and in insulin signaling pathway, such as daf-28, which may in turn contribute to exploratory behavior. The sequence is that of Serpentine receptor class X-43 from Caenorhabditis elegans.